The sequence spans 139 residues: Large ribosomal subunit protein bL17 (139 aa).

The protein belongs to the bacterial ribosomal protein bL17 family. As to quaternary structure, part of the 50S ribosomal subunit. Contacts protein L32.

This is Large ribosomal subunit protein bL17 from Afipia carboxidovorans (strain ATCC 49405 / DSM 1227 / KCTC 32145 / OM5) (Oligotropha carboxidovorans).